Reading from the N-terminus, the 420-residue chain is MCSTREEITEAFASLATALSRVLGLTFDALTTPERLALLEHCETARRQLPSVEHTLINQIGEQSTEEELGGKLGLTLADRLRITRSEAKRRVAEAADLGQRRALTGEPLPPLLTATAKAQRHGLIGDGHVEVIRAFVHRLPSWVDLKTLEKAERDLAKQATQYRPDQLAKLAARIMDCLNPDGDYTDEDRARRRGLTLGKQDVDGMSRLSGYVTPELRATIEAVWAKLAAPGMCNPEQKAPCVNGAPSKEQARRDTRSCPQRNHDALNAGLRSLLTSGNLGQHNGLPASIIVTTTLKDLEAAAGAGLTGGGTILPISDVIRLARHANHYLAIFDRGKALALYHTKRLASPAQRIMLYAKDSGCSAPGCDVPGYYCEVHHVTPYAQCRNTDVNDLTLGCGGHHPLAERGWTTRKNAHGDTE.

It belongs to the Rv1128c/1148c/1588c/1702c/1945/3466 family.

This is an uncharacterized protein from Mycobacterium tuberculosis (strain CDC 1551 / Oshkosh).